Reading from the N-terminus, the 202-residue chain is Dephospho-CoA kinase (202 aa).

Residues 5-202 (IVGLTGGIAS…DADYRARSDR (198 aa)) form the DPCK domain. ATP is bound at residue 13 to 18 (ASGKSA).

The protein belongs to the CoaE family.

Its subcellular location is the cytoplasm. The catalysed reaction is 3'-dephospho-CoA + ATP = ADP + CoA + H(+). The protein operates within cofactor biosynthesis; coenzyme A biosynthesis; CoA from (R)-pantothenate: step 5/5. Catalyzes the phosphorylation of the 3'-hydroxyl group of dephosphocoenzyme A to form coenzyme A. In Xanthomonas oryzae pv. oryzae (strain MAFF 311018), this protein is Dephospho-CoA kinase.